A 494-amino-acid polypeptide reads, in one-letter code: Aspartyl/glutamyl-tRNA(Asn/Gln) amidotransferase subunit B (494 aa).

Belongs to the GatB/GatE family. GatB subfamily. As to quaternary structure, heterotrimer of A, B and C subunits.

The enzyme catalyses L-glutamyl-tRNA(Gln) + L-glutamine + ATP + H2O = L-glutaminyl-tRNA(Gln) + L-glutamate + ADP + phosphate + H(+). It carries out the reaction L-aspartyl-tRNA(Asn) + L-glutamine + ATP + H2O = L-asparaginyl-tRNA(Asn) + L-glutamate + ADP + phosphate + 2 H(+). Its function is as follows. Allows the formation of correctly charged Asn-tRNA(Asn) or Gln-tRNA(Gln) through the transamidation of misacylated Asp-tRNA(Asn) or Glu-tRNA(Gln) in organisms which lack either or both of asparaginyl-tRNA or glutaminyl-tRNA synthetases. The reaction takes place in the presence of glutamine and ATP through an activated phospho-Asp-tRNA(Asn) or phospho-Glu-tRNA(Gln). The sequence is that of Aspartyl/glutamyl-tRNA(Asn/Gln) amidotransferase subunit B from Synechococcus sp. (strain CC9902).